We begin with the raw amino-acid sequence, 124 residues long: NADH dehydrogenase [ubiquinone] iron-sulfur protein 6, mitochondrial (124 aa).

A mitochondrion-targeting transit peptide spans 1–28; it reads MAAAMTFCRLLNRCGEAARSLPLGARCF. Position 98 is an N6-acetyllysine (Lys98).

Belongs to the complex I NDUFS6 subunit family. As to quaternary structure, mammalian complex I is composed of 45 different subunits. This is a component of the iron-sulfur (IP) fragment of the enzyme.

The protein resides in the mitochondrion inner membrane. In terms of biological role, accessory subunit of the mitochondrial membrane respiratory chain NADH dehydrogenase (Complex I), that is believed not to be involved in catalysis. Complex I functions in the transfer of electrons from NADH to the respiratory chain. The immediate electron acceptor for the enzyme is believed to be ubiquinone. The protein is NADH dehydrogenase [ubiquinone] iron-sulfur protein 6, mitochondrial (NDUFS6) of Gorilla gorilla gorilla (Western lowland gorilla).